A 152-amino-acid chain; its full sequence is MTCTDQKSHSQRALGTQTPALQGPQLLNTDPSSEETRPPHVYPDRLCHMEPANHFWHAGDLQAMTSKEFHLAATQDDCRKGRTQEDILVPSSHPELFSSVLPMALEEAARLQQPQPLPPPSGIHLSASRTSAPTLLYSPPPSHSPFGLSSLI.

A compositionally biased stretch (polar residues) spans Met1–Pro31. Disordered stretches follow at residues Met1–Pro39 and Ala132–Ile152.

The sequence is that of Psoriasis susceptibility 1 candidate gene 1 protein homolog (PSORS1C1) from Pan troglodytes (Chimpanzee).